The primary structure comprises 559 residues: Polypeptide N-acetylgalactosaminyltransferase 1 (559 aa).

Residues 1–8 (MRKFAYCK) lie on the Cytoplasmic side of the membrane. A helical; Signal-anchor for type II membrane protein membrane pass occupies residues 9 to 28 (VVLATSLVWVLLDMFLLLYF). At 29-559 (SECNKCEEKK…LRNVTLPEIF (531 aa)) the chain is on the lumenal side. Asn95 is a glycosylation site (N-linked (GlcNAc...) asparagine). 5 disulfides stabilise this stretch: Cys106–Cys339, Cys330–Cys408, Cys442–Cys459, Cys482–Cys497, and Cys523–Cys540. Residues 115–225 (LPTTSVVIVF…VGWLEPLLAR (111 aa)) form a catalytic subdomain A region. Asp156 and Arg186 together coordinate substrate. Mn(2+)-binding residues include Asp209 and His211. A catalytic subdomain B region spans residues 285 to 347 (PVRTPTMAGG…TCSHVGHVFR (63 aa)). Trp316 contacts substrate. His344 is a Mn(2+) binding site. Arg347 and Tyr352 together coordinate substrate. One can recognise a Ricin B-type lectin domain in the interval 429 to 551 (FSLGEIRNVE…GSRSQQWLLR (123 aa)). N-linked (GlcNAc...) asparagine glycosylation is present at Asn552.

This sequence belongs to the glycosyltransferase 2 family. GalNAc-T subfamily. Mn(2+) serves as cofactor. In terms of tissue distribution, heart, brain, spleen, liver, skeletal muscle and kidney.

Its subcellular location is the golgi apparatus. The protein resides in the golgi stack membrane. It is found in the secreted. The catalysed reaction is L-seryl-[protein] + UDP-N-acetyl-alpha-D-galactosamine = a 3-O-[N-acetyl-alpha-D-galactosaminyl]-L-seryl-[protein] + UDP + H(+). The enzyme catalyses L-threonyl-[protein] + UDP-N-acetyl-alpha-D-galactosamine = a 3-O-[N-acetyl-alpha-D-galactosaminyl]-L-threonyl-[protein] + UDP + H(+). It functions in the pathway protein modification; protein glycosylation. Its function is as follows. Catalyzes the initial reaction in O-linked oligosaccharide biosynthesis, the transfer of an N-acetyl-D-galactosamine residue to a serine or threonine residue on the protein receptor. Has a broad spectrum of substrates such as apomucin-, MUC5AC-, MUC1- and MUC2-derived peptides. This Rattus norvegicus (Rat) protein is Polypeptide N-acetylgalactosaminyltransferase 1.